A 463-amino-acid chain; its full sequence is Asparagine--tRNA ligase (463 aa).

This sequence belongs to the class-II aminoacyl-tRNA synthetase family. Homodimer.

The protein resides in the cytoplasm. The catalysed reaction is tRNA(Asn) + L-asparagine + ATP = L-asparaginyl-tRNA(Asn) + AMP + diphosphate + H(+). In Bacillus cereus (strain ZK / E33L), this protein is Asparagine--tRNA ligase.